The chain runs to 126 residues: Major sperm protein 3 (126 aa).

Residue alanine 2 is modified to N-acetylalanine. Residues 8–125 form the MSP domain; that stretch reads DIATMPAQKV…RRKNLPIEYN (118 aa).

In terms of tissue distribution, sperm.

The protein localises to the cell projection. It localises to the pseudopodium. It is found in the cytoplasm. The protein resides in the cytoskeleton. Functionally, central component in molecular interactions underlying sperm crawling. Forms an extensive filament system that extends from sperm villipoda, along the leading edge of the pseudopod. This is Major sperm protein 3 (MSP-3) from Globodera rostochiensis (Golden nematode worm).